The sequence spans 521 residues: GMC-type oxidoreductase acuG (521 aa).

FAD is bound by residues T14–V15, E34–A35, L82, N90–L93, A492, and Y503–Q504.

The protein belongs to the GMC oxidoreductase family. Requires FAD as cofactor.

It participates in secondary metabolite biosynthesis. GMC-type oxidoreductase; part of the gene cluster that mediates the biosynthesis of aculins. The pathway begins with the synthesis of 6-methylsalicylic acid by the polyketide synthase (PKS) acuA via condensation of acetate and malonate units. The 6-methylsalicylic acid decarboxylase acuB then catalyzes the decarboxylation of 6-methylsalicylic acid to yield m-cresol (also known as 3-methylphenol). These first reactions occur in the cytosol. The intermediate m-cresol is then transported into the endoplasmic reticulum where the cytochrome P450 monooxygenase acuC converts it to m-hydroxybenzyl alcohol, which is further converted to gentisyl alcohol by the cytochrome P450 monooxygenase acuD. Gentisyl alcohol is further oxidized by the oxidoreductase acuE that probably catalyzes hydroxylation of the aromatic ring. The aromatic system might then be opened by oxidation through a Baeyer-Villiger type of oxidation, which could be catalyzed by acuF, with the carboxylic acid at C-1 subsequently reduced to an aldehyde by acuG. Subsequently, a hemiacetal is formed, before the dehydrogenase acuH would reduce the double bond between C-4 and C-6. Finally, keto-enol tautomerism results in formation of aculinic acid, which exists as two diastereomers (both R/S configurations at C-1) by non-enzymatic hemiacetal formation. The carboxypeptidase acuI could be involved in the linking of aculinic acid to an aculene A moiety produced by the aculene biosynthesis cluster and which leads to the production of aculin A. AcuI may also be involved in the attachment of proline to aculinic acid to form epi-aculins A and B. This Aspergillus aculeatus (strain ATCC 16872 / CBS 172.66 / WB 5094) protein is GMC-type oxidoreductase acuG.